A 117-amino-acid chain; its full sequence is Hydrogenase maturation factor HypA (117 aa).

Residue histidine 2 coordinates Ni(2+). Zn(2+) contacts are provided by cysteine 73, cysteine 76, cysteine 89, and cysteine 92.

Belongs to the HypA/HybF family.

Its function is as follows. Involved in the maturation of [NiFe] hydrogenases. Required for nickel insertion into the metal center of the hydrogenase. The protein is Hydrogenase maturation factor HypA of Shewanella baltica (strain OS185).